Consider the following 657-residue polypeptide: MTQLAIGKPTPLGAHYDGQGVNFTLFSAHAERVELCVFDANGQEHRYDLPGHSGDIWHGYLPDARPGLRYGYRVHGPWQPAEGHRFNPAKLLIDPCARQIDGEFKDNPLLHAGHNEPDYRDNAAIAPKCVVVVDHYDWEDDAPPRTPWGSTIIYEAHVKGLTYLHPEIPVEIRGTYKALGHPVMINYLKQLGITALELLPVAQFASEPRLQRMGLSNYWGYNPVAMFALHPAYACSPETALDEFRDAIKALHKAGIEVILDIVLNHSAELDLDGPLFSLRGIDNRSYYWIREDGDYHNWTGCGNTLNLSHPAVVDYASACLRYWVETCHVDGFRFDLAAVMGRTPEFRQDAPLFTAIQNCPVLSQVKLIAEPWDIAPGGYQVGNFPPLFAEWNDHFRDAARRFWLHYDLPLGAFAGRFAASSDVFKRNDRLPSAAINLVTAHDGFTLRDCVCFNHKHNEANGEENRDGTNNNYSNNHGKEGLGGTLDLVERRRDSIHALLTTLLLSQGTPMLLAGDEHGHSQHGNNNAYCQDNQLTWLDWSQASSGLTAFTAALIHLRKRIPALMENRWWEEGDGNVRWLNRYAQPLSTDEWQNGPKQLQILLSDRFLIAINATLEVTEIVLPAGEWHAIPPFAGEDNPVITAVWQGPAHGLCVFQR.

Aspartate 336 acts as the Nucleophile in catalysis. Glutamate 371 serves as the catalytic Proton donor. The disordered stretch occupies residues 460–479; that stretch reads ANGEENRDGTNNNYSNNHGK.

The protein belongs to the glycosyl hydrolase 13 family.

It catalyses the reaction Hydrolysis of (1-&gt;6)-alpha-D-glucosidic linkages to branches with degrees of polymerization of three or four glucose residues in limit dextrin.. Its pathway is glycan degradation; glycogen degradation. Its function is as follows. Removes maltotriose and maltotetraose chains that are attached by 1,6-alpha-linkage to the limit dextrin main chain, generating a debranched limit dextrin. In Escherichia coli O6:K15:H31 (strain 536 / UPEC), this protein is Glycogen debranching enzyme.